Reading from the N-terminus, the 276-residue chain is Dermonecrotic toxin LlSicTox-alphaIV3 (276 aa).

His-5 is an active-site residue. 2 residues coordinate Mg(2+): Glu-25 and Asp-27. His-41 (nucleophile) is an active-site residue. 2 cysteine pairs are disulfide-bonded: Cys-45–Cys-51 and Cys-47–Cys-192. Asp-85 is a binding site for Mg(2+).

It belongs to the arthropod phospholipase D family. Class II subfamily. The cofactor is Mg(2+). In terms of tissue distribution, expressed by the venom gland.

It localises to the secreted. It carries out the reaction an N-(acyl)-sphingosylphosphocholine = an N-(acyl)-sphingosyl-1,3-cyclic phosphate + choline. It catalyses the reaction an N-(acyl)-sphingosylphosphoethanolamine = an N-(acyl)-sphingosyl-1,3-cyclic phosphate + ethanolamine. The enzyme catalyses a 1-acyl-sn-glycero-3-phosphocholine = a 1-acyl-sn-glycero-2,3-cyclic phosphate + choline. The catalysed reaction is a 1-acyl-sn-glycero-3-phosphoethanolamine = a 1-acyl-sn-glycero-2,3-cyclic phosphate + ethanolamine. In terms of biological role, dermonecrotic toxins cleave the phosphodiester linkage between the phosphate and headgroup of certain phospholipids (sphingolipid and lysolipid substrates), forming an alcohol (often choline) and a cyclic phosphate. This toxin acts on sphingomyelin (SM). It may also act on ceramide phosphoethanolamine (CPE), lysophosphatidylcholine (LPC) and lysophosphatidylethanolamine (LPE), but not on lysophosphatidylserine (LPS), and lysophosphatidylglycerol (LPG). It acts by transphosphatidylation, releasing exclusively cyclic phosphate products as second products. Induces dermonecrosis, hemolysis, increased vascular permeability, edema, inflammatory response, and platelet aggregation. The protein is Dermonecrotic toxin LlSicTox-alphaIV3 of Loxosceles laeta (South American recluse spider).